The sequence spans 495 residues: Probable leucine aminopeptidase 2 (495 aa).

The N-terminal stretch at 1–21 is a signal peptide; that stretch reads MKSQLLSLAVAVTTISQGVVG. Positions 130 to 216 constitute a PA domain; that stretch reads MAELVVAKNN…SQEDGKNLAT (87 aa). N-linked (GlcNAc...) asparagine glycans are attached at residues N142 and N235. Zn(2+)-binding residues include H259 and D271. N272 carries N-linked (GlcNAc...) asparagine glycosylation. The Proton acceptor role is filled by E303. E304 and D332 together coordinate Zn(2+). A glycan (N-linked (GlcNAc...) asparagine) is linked at N352. H430 contributes to the Zn(2+) binding site.

Belongs to the peptidase M28 family. M28A subfamily. As to quaternary structure, monomer. Zn(2+) serves as cofactor.

It localises to the secreted. Its function is as follows. Extracellular aminopeptidase that releases a wide variety of amino acids from natural peptides and contributes to pathogenicity. The polypeptide is Probable leucine aminopeptidase 2 (LAP2) (Arthroderma benhamiae (strain ATCC MYA-4681 / CBS 112371) (Trichophyton mentagrophytes)).